Here is a 632-residue protein sequence, read N- to C-terminus: Chaperone protein DnaK (632 aa).

Position 198 is a phosphothreonine; by autocatalysis (threonine 198). The interval 599–632 is disordered; that stretch reads YKKAGASQQGAGSTTQSKKEEDVIEAEVEDKDNK. Over residues 604–614 the composition is skewed to polar residues; sequence ASQQGAGSTTQ. The span at 620-632 shows a compositional bias: acidic residues; that stretch reads DVIEAEVEDKDNK.

Belongs to the heat shock protein 70 family.

Acts as a chaperone. This is Chaperone protein DnaK from Thermodesulfovibrio yellowstonii (strain ATCC 51303 / DSM 11347 / YP87).